The primary structure comprises 313 residues: UDP-N-acetylenolpyruvoylglucosamine reductase (313 aa).

Positions 31-207 constitute an FAD-binding PCMH-type domain; the sequence is VGGPADALVA…TGVDLGLGFD (177 aa). Arg-180 is an active-site residue. Catalysis depends on Cys-236, which acts as the Proton donor. Residue Glu-307 is part of the active site.

This sequence belongs to the MurB family. It depends on FAD as a cofactor.

The protein localises to the cytoplasm. The enzyme catalyses UDP-N-acetyl-alpha-D-muramate + NADP(+) = UDP-N-acetyl-3-O-(1-carboxyvinyl)-alpha-D-glucosamine + NADPH + H(+). It participates in cell wall biogenesis; peptidoglycan biosynthesis. Functionally, cell wall formation. The polypeptide is UDP-N-acetylenolpyruvoylglucosamine reductase (Desulfosudis oleivorans (strain DSM 6200 / JCM 39069 / Hxd3) (Desulfococcus oleovorans)).